The following is a 1485-amino-acid chain: DNA topoisomerase 2 (1485 aa).

A compositionally biased stretch (acidic residues) spans 1 to 16 (MSIDADFSDYEDEASG). A disordered region spans residues 1 to 76 (MSIDADFSDY…NGNGNSNVST (76 aa)). Over residues 46-59 (DLRQTSLTSMTASE) the composition is skewed to polar residues. The span at 64–76 (VTNNGNGNSNVST) shows a compositional bias: low complexity. ATP contacts are provided by residues N136, N165, 193–195 (SSN), and 206–213 (GRNGYGAK). The interaction with DNA stretch occupies residues 388–392 (KKENK). 421–423 (QTK) contacts ATP. Residues 499–613 (CVLILTEGDS…SLLQIPGFLI (115 aa)) form the Toprim domain. 3 residues coordinate Mg(2+): E505, D582, and D584. The region spanning 745–1195 (IPSVVDGLKP…TPKELWLHDL (451 aa)) is the Topo IIA-type catalytic domain. The O-(5'-phospho-DNA)-tyrosine intermediate role is filled by Y835. The interaction with DNA stretch occupies residues 1019 to 1028 (KLSRTQATSN). The segment covering 1216-1225 (EEQSSRDFVN) has biased composition (basic and acidic residues). The disordered stretch occupies residues 1216–1485 (EEQSSRDFVN…EDVDDYDESD (270 aa)). Basic residues predominate over residues 1226–1242 (RTKKKPRGKSTGTRKPR). A compositionally biased stretch (polar residues) spans 1260–1273 (ESKPSTTNRKQQTL). Positions 1278-1307 (ASKEPEKSSDINIVKTEDNSHGLSVEENRI) are enriched in basic and acidic residues. Residues S1310 and S1345 each carry the phosphoserine modification. Residues 1387 to 1396 (AKNKGKKASS) show a composition bias toward basic residues. Residues 1413 to 1425 (GSSSTPKASSTNA) are compositionally biased toward polar residues. S1433 bears the Phosphoserine mark. The segment covering 1473–1485 (DNDEDVDDYDESD) has biased composition (acidic residues).

Belongs to the type II topoisomerase family. As to quaternary structure, homodimer. It depends on Mg(2+) as a cofactor. Mn(2+) serves as cofactor. The cofactor is Ca(2+). Phosphorylated at multiple sites at both extremities of the protein.

The protein resides in the nucleus. The catalysed reaction is ATP-dependent breakage, passage and rejoining of double-stranded DNA.. Control of topological states of DNA by transient breakage and subsequent rejoining of DNA strands. Topoisomerase II makes double-strand breaks. This Schizosaccharomyces pombe (strain 972 / ATCC 24843) (Fission yeast) protein is DNA topoisomerase 2 (top2).